We begin with the raw amino-acid sequence, 349 residues long: Isopentenyl-diphosphate delta-isomerase (349 aa).

9–10 (RK) lines the substrate pocket. FMN is bound by residues 65–67 (AMT), Ser-95, and Asn-124. 95–97 (STH) is a binding site for substrate. Substrate is bound at residue Gln-154. Glu-155 is a Mg(2+) binding site. Residues Lys-186, Ser-211, Thr-216, 262–264 (GLR), and 283–284 (SR) each bind FMN.

This sequence belongs to the IPP isomerase type 2 family. As to quaternary structure, homooctamer. Dimer of tetramers. Requires FMN as cofactor. It depends on NADPH as a cofactor. Mg(2+) is required as a cofactor.

The protein resides in the cytoplasm. It catalyses the reaction isopentenyl diphosphate = dimethylallyl diphosphate. Functionally, involved in the biosynthesis of isoprenoids. Catalyzes the 1,3-allylic rearrangement of the homoallylic substrate isopentenyl (IPP) to its allylic isomer, dimethylallyl diphosphate (DMAPP). The chain is Isopentenyl-diphosphate delta-isomerase from Staphylococcus aureus (strain MSSA476).